The sequence spans 268 residues: Peptide transport system ATP-binding protein SapF (268 aa).

The ABC transporter domain maps to 6-251 (LEVRNLSKTF…PLHELTRRLI (246 aa)). 47–54 (GENGSGKS) serves as a coordination point for ATP.

Belongs to the ABC transporter superfamily.

The protein resides in the cell inner membrane. In terms of biological role, involved in a peptide intake transport system that plays a role in the resistance to antimicrobial peptides. This is Peptide transport system ATP-binding protein SapF from Salmonella typhimurium (strain LT2 / SGSC1412 / ATCC 700720).